The primary structure comprises 158 residues: 2-C-methyl-D-erythritol 2,4-cyclodiphosphate synthase (158 aa).

Residues D9 and H11 each coordinate a divalent metal cation. 4-CDP-2-C-methyl-D-erythritol 2-phosphate contacts are provided by residues 9 to 11 and 35 to 36; these read DVH and HS. H43 serves as a coordination point for a divalent metal cation. 4-CDP-2-C-methyl-D-erythritol 2-phosphate is bound by residues 57–59, 62–66, 133–136, F140, and R143; these read DIG, FPDTD, and TTTE.

It belongs to the IspF family. As to quaternary structure, homotrimer. A divalent metal cation serves as cofactor.

It carries out the reaction 4-CDP-2-C-methyl-D-erythritol 2-phosphate = 2-C-methyl-D-erythritol 2,4-cyclic diphosphate + CMP. It functions in the pathway isoprenoid biosynthesis; isopentenyl diphosphate biosynthesis via DXP pathway; isopentenyl diphosphate from 1-deoxy-D-xylulose 5-phosphate: step 4/6. Involved in the biosynthesis of isopentenyl diphosphate (IPP) and dimethylallyl diphosphate (DMAPP), two major building blocks of isoprenoid compounds. Catalyzes the conversion of 4-diphosphocytidyl-2-C-methyl-D-erythritol 2-phosphate (CDP-ME2P) to 2-C-methyl-D-erythritol 2,4-cyclodiphosphate (ME-CPP) with a corresponding release of cytidine 5-monophosphate (CMP). The polypeptide is 2-C-methyl-D-erythritol 2,4-cyclodiphosphate synthase (Actinobacillus succinogenes (strain ATCC 55618 / DSM 22257 / CCUG 43843 / 130Z)).